The primary structure comprises 596 residues: Putative terpene synthase 2, chloroplastic (596 aa).

The N-terminal 46 residues, 1–46 (MATLSMQVSTLSKQVKNLNTFGMGSASKLPMVARRVSTTRLRPICS), are a transit peptide targeting the chloroplast. The Mn(2+) site is built by D349 and D353. The short motif at 349 to 353 (DDVYD) is the DDXXD motif element. 2 homodimerization regions span residues 355 to 361 (YGTLDEL) and 427 to 464 (EAKW…FTLP). 2 residues coordinate Mn(2+): D493 and E501.

Belongs to the terpene synthase family. As to quaternary structure, homodimer. The cofactor is Mn(2+). It depends on Mg(2+) as a cofactor.

It localises to the plastid. The protein resides in the chloroplast. It functions in the pathway secondary metabolite biosynthesis; terpenoid biosynthesis. In terms of biological role, putative monoterpene synthase inactive on geranyl diphosphate (GPP). The sequence is that of Putative terpene synthase 2, chloroplastic from Thymus vulgaris (Thyme).